A 639-amino-acid chain; its full sequence is Threonine--tRNA ligase (639 aa).

Residues 1–61 form the TGS domain; that stretch reads MIHITLPDGS…TQDSPLSIVT (61 aa). The interval 242-533 is catalytic; that stretch reads DHRKLGRELD…LIEEHAGALP (292 aa). Residues C333, H384, and H510 each coordinate Zn(2+).

This sequence belongs to the class-II aminoacyl-tRNA synthetase family. Homodimer. Zn(2+) serves as cofactor.

It is found in the cytoplasm. It carries out the reaction tRNA(Thr) + L-threonine + ATP = L-threonyl-tRNA(Thr) + AMP + diphosphate + H(+). Functionally, catalyzes the attachment of threonine to tRNA(Thr) in a two-step reaction: L-threonine is first activated by ATP to form Thr-AMP and then transferred to the acceptor end of tRNA(Thr). Also edits incorrectly charged L-seryl-tRNA(Thr). The sequence is that of Threonine--tRNA ligase from Acidovorax ebreus (strain TPSY) (Diaphorobacter sp. (strain TPSY)).